The following is a 163-amino-acid chain: Phosphopantetheine adenylyltransferase (163 aa).

Residue T10 coordinates substrate. ATP-binding positions include 10-11 and H18; that span reads TF. Substrate contacts are provided by K42, L74, and R88. Residues 89 to 91, E99, and 124 to 130 contribute to the ATP site; these read GLR and NSFISST.

It belongs to the bacterial CoaD family. Homohexamer. Requires Mg(2+) as cofactor.

It localises to the cytoplasm. The enzyme catalyses (R)-4'-phosphopantetheine + ATP + H(+) = 3'-dephospho-CoA + diphosphate. The protein operates within cofactor biosynthesis; coenzyme A biosynthesis; CoA from (R)-pantothenate: step 4/5. Its function is as follows. Reversibly transfers an adenylyl group from ATP to 4'-phosphopantetheine, yielding dephospho-CoA (dPCoA) and pyrophosphate. The protein is Phosphopantetheine adenylyltransferase of Shewanella baltica (strain OS223).